Reading from the N-terminus, the 259-residue chain is tRNA (guanine-N(1)-)-methyltransferase (259 aa).

Residues G117 and 137-142 (LGDFVL) contribute to the S-adenosyl-L-methionine site.

Belongs to the RNA methyltransferase TrmD family. Homodimer.

The protein resides in the cytoplasm. It catalyses the reaction guanosine(37) in tRNA + S-adenosyl-L-methionine = N(1)-methylguanosine(37) in tRNA + S-adenosyl-L-homocysteine + H(+). Specifically methylates guanosine-37 in various tRNAs. The polypeptide is tRNA (guanine-N(1)-)-methyltransferase (Polaromonas sp. (strain JS666 / ATCC BAA-500)).